Reading from the N-terminus, the 274-residue chain is Dermonecrotic toxin LcsSicTox-betaIC1 (274 aa).

Residue His-5 is part of the active site. Mg(2+) contacts are provided by Glu-25 and Asp-27. His-41 acts as the Nucleophile in catalysis. Intrachain disulfides connect Cys-45/Cys-51 and Cys-47/Cys-190. N-linked (GlcNAc...) asparagine glycosylation occurs at Asn-66. Asp-85 is a binding site for Mg(2+).

This sequence belongs to the arthropod phospholipase D family. Class II subfamily. It depends on Mg(2+) as a cofactor. In terms of tissue distribution, expressed by the venom gland.

It is found in the secreted. It catalyses the reaction an N-(acyl)-sphingosylphosphocholine = an N-(acyl)-sphingosyl-1,3-cyclic phosphate + choline. It carries out the reaction an N-(acyl)-sphingosylphosphoethanolamine = an N-(acyl)-sphingosyl-1,3-cyclic phosphate + ethanolamine. The enzyme catalyses a 1-acyl-sn-glycero-3-phosphocholine = a 1-acyl-sn-glycero-2,3-cyclic phosphate + choline. The catalysed reaction is a 1-acyl-sn-glycero-3-phosphoethanolamine = a 1-acyl-sn-glycero-2,3-cyclic phosphate + ethanolamine. Dermonecrotic toxins cleave the phosphodiester linkage between the phosphate and headgroup of certain phospholipids (sphingolipid and lysolipid substrates), forming an alcohol (often choline) and a cyclic phosphate. This toxin acts on sphingomyelin (SM). It may also act on ceramide phosphoethanolamine (CPE), lysophosphatidylcholine (LPC) and lysophosphatidylethanolamine (LPE), but not on lysophosphatidylserine (LPS), and lysophosphatidylglycerol (LPG). It acts by transphosphatidylation, releasing exclusively cyclic phosphate products as second products. Induces dermonecrosis, hemolysis, increased vascular permeability, edema, inflammatory response, and platelet aggregation. The polypeptide is Dermonecrotic toxin LcsSicTox-betaIC1 (Loxosceles cf. spinulosa (strain GJB-2008) (Recluse spider)).